The following is a 132-amino-acid chain: Small ribosomal subunit protein uS8 (132 aa).

The protein belongs to the universal ribosomal protein uS8 family. Part of the 30S ribosomal subunit. Contacts proteins S5 and S12.

In terms of biological role, one of the primary rRNA binding proteins, it binds directly to 16S rRNA central domain where it helps coordinate assembly of the platform of the 30S subunit. In Geotalea daltonii (strain DSM 22248 / JCM 15807 / FRC-32) (Geobacter daltonii), this protein is Small ribosomal subunit protein uS8.